The primary structure comprises 1007 residues: Serine/threonine-protein kinase PRP4 homolog (1007 aa).

Positions 1–10 (MAAAETQSLR) are enriched in polar residues. The tract at residues 1–99 (MAAAETQSLR…EGMSPAKRTK (99 aa)) is disordered. Ala2 is modified (N-acetylalanine). 4 positions are modified to phosphoserine: Ser8, Ser20, Ser23, and Ser32. Basic residues-rich tracts occupy residues 39–59 (KHSR…KHKH) and 67–81 (KKHK…HKRK). A compositionally biased stretch (basic and acidic residues) spans 82-91 (EIIDASDKEG). Phosphoserine is present on residues Ser87 and Ser93. At Lys99 the chain carries N6-acetyllysine; alternate. Lys99 is covalently cross-linked (Glycyl lysine isopeptide (Lys-Gly) (interchain with G-Cter in SUMO2); alternate). Lys111 participates in a covalent cross-link: Glycyl lysine isopeptide (Lys-Gly) (interchain with G-Cter in SUMO2). Residue Lys117 forms a Glycyl lysine isopeptide (Lys-Gly) (interchain with G-Cter in SUMO2); alternate linkage. Lys117 is covalently cross-linked (Glycyl lysine isopeptide (Lys-Gly) (interchain with G-Cter in SUMO1); alternate). Ser131 carries the phosphoserine modification. Residue Tyr140 is modified to Phosphotyrosine. Disordered regions lie at residues 140 to 533 (YESG…EEED) and 559 to 583 (SNMS…SPDD). 3 positions are modified to phosphoserine: Ser142, Ser144, and Ser166. A compositionally biased stretch (low complexity) spans 157–168 (GNRSSTRSSSTK). Residues Lys170 and Lys177 each participate in a glycyl lysine isopeptide (Lys-Gly) (interchain with G-Cter in SUMO2) cross-link. 2 stretches are compositionally biased toward basic residues: residues 179–202 (TTKK…KKSK) and 214–230 (RSKS…SKRS). Ser239, Ser241, Ser257, Ser277, Ser283, Ser292, and Ser294 each carry phosphoserine. Over residues 247 to 270 (RSQEKIGKARSPTDDKVKIEDKSK) the composition is skewed to basic and acidic residues. Over residues 302–315 (SKDRRSRSKERKSK) the composition is skewed to basic residues. Residues 316 to 325 (RSETDKEKKP) are compositionally biased toward basic and acidic residues. A phosphoserine mark is found at Ser328, Ser354, Ser356, Ser366, and Ser368. A compositionally biased stretch (basic residues) spans 342–367 (PSRRPGRSPKRRSLSPKPRDKSRRSR). Phosphothreonine is present on Thr385. Ser387 carries the phosphoserine modification. Basic and acidic residues-rich tracts occupy residues 395 to 408 (RSLE…ERRR) and 415 to 429 (RPRD…RSKD). 3 positions are modified to phosphoserine: Ser427, Ser431, and Ser437. Over residues 438 to 497 (PTRRRSRSPIRRRSRSPLRRSRSPRRRSRSPRRRDRGRRSRSRLRRRSRSRGGRRRRSRS) the composition is skewed to basic residues. Phosphoserine occurs at positions 518, 519, 520, 565, 569, 578, and 580. Positions 518-533 (SSSDDNLEDFDVEEED) are enriched in acidic residues. Residues 562-581 (SVPSEPSSPQSSTRTRSPSP) are compositionally biased toward low complexity. Residues Lys593 and Lys659 each participate in a glycyl lysine isopeptide (Lys-Gly) (interchain with G-Cter in SUMO2) cross-link. The Protein kinase domain maps to 687–1006 (YNVYGYTGQG…ALQHAFIQEK (320 aa)). ATP contacts are provided by residues 693 to 701 (TGQGVFSNV) and Lys717. Lys717 carries the N6-acetyllysine modification. Residue Asp815 is the Proton acceptor of the active site. A Phosphotyrosine modification is found at Tyr849. Residue Ser852 is modified to Phosphoserine.

It belongs to the protein kinase superfamily. CMGC Ser/Thr protein kinase family. In terms of assembly, interacts with CLK1 C-terminus. Associates with the U5 snRNP and NCOR1 deacetylase complexes. Identified in the spliceosome C complex. Phosphorylated by CLK1. Autophosphorylated; phosphorylation inhibits interaction with its targets, such as PRPF6 or SMARCA4. Ubiquitous.

It is found in the nucleus. The protein resides in the chromosome. It localises to the centromere. Its subcellular location is the kinetochore. The enzyme catalyses L-seryl-[protein] + ATP = O-phospho-L-seryl-[protein] + ADP + H(+). It carries out the reaction L-threonyl-[protein] + ATP = O-phospho-L-threonyl-[protein] + ADP + H(+). Its function is as follows. Serine/threonine kinase involved in spliceosomal assembly as well as mitosis and signaling regulation. Connects chromatin mediated regulation of transcription and pre-mRNA splicing. During spliceosomal assembly, interacts with and phosphorylates PRPF6 and PRPF31, components of the U4/U6-U5 tri-small nuclear ribonucleoprotein (snRNP), to facilitate the formation of the spliceosome B complex. Plays a role in regulating transcription and the spindle assembly checkpoint (SAC). Associates with U5 snRNP and NCOR1 deacetylase complexes which may allow a coordination of pre-mRNA splicing with chromatin remodeling events involved in transcriptional regulation. Associates and probably phosphorylates SMARCA4 and NCOR1. Phosphorylates SRSF1. Associates with kinetochores during mitosis and is necessary for recruitment and maintenance of the checkpoint proteins such as MAD1L1 and MAD12L1 at the kinetochores. Phosphorylates and regulates the activity of the transcription factors such as ELK1 and KLF13. Phosphorylates nuclear YAP1 and WWTR1/TAZ which induces nuclear exclusion and regulates Hippo signaling pathway, involved in tissue growth control. The sequence is that of Serine/threonine-protein kinase PRP4 homolog from Homo sapiens (Human).